A 706-amino-acid chain; its full sequence is Protein-glutamine gamma-glutamyltransferase 6 (706 aa).

Ca(2+) contacts are provided by alanine 223, asparagine 226, and asparagine 228. The active site involves cysteine 274. The Ca(2+) site is built by aspartate 303, aspartate 305, asparagine 307, serine 309, and aspartate 327. Catalysis depends on residues histidine 333 and aspartate 356. Asparagine 396, threonine 417, glutamate 445, and glutamate 450 together coordinate Ca(2+).

The protein belongs to the transglutaminase superfamily. Transglutaminase family. The cofactor is Ca(2+).

It localises to the cytoplasm. The enzyme catalyses L-glutaminyl-[protein] + L-lysyl-[protein] = [protein]-L-lysyl-N(6)-5-L-glutamyl-[protein] + NH4(+). Its function is as follows. Catalyzes the cross-linking of proteins and the conjugation of polyamines to proteins. The chain is Protein-glutamine gamma-glutamyltransferase 6 (TGM6) from Homo sapiens (Human).